An 89-amino-acid polypeptide reads, in one-letter code: Large ribosomal subunit protein uL23c (89 aa).

This sequence belongs to the universal ribosomal protein uL23 family. As to quaternary structure, part of the 50S ribosomal subunit.

Its subcellular location is the plastid. It is found in the chloroplast. In terms of biological role, binds to 23S rRNA. The chain is Large ribosomal subunit protein uL23c (rpl23) from Staurastrum punctulatum (Green alga).